The primary structure comprises 407 residues: Putative serine/threonine-protein kinase C01C4.3 (407 aa).

Polar residues predominate over residues 33 to 57 (NQLQNHPPRNATQSPQRQPRTSESS). Positions 33–68 (NQLQNHPPRNATQSPQRQPRTSESSMDFPRSALRRN) are disordered. Residues 126-397 (YTVNKQLGTG…RKCLAKEKLL (272 aa)) form the Protein kinase domain. ATP is bound by residues 132–140 (LGTGRFGFI) and Lys-155. Catalysis depends on Asn-251, which acts as the Proton acceptor.

The protein belongs to the protein kinase superfamily. Ser/Thr protein kinase family.

The enzyme catalyses L-seryl-[protein] + ATP = O-phospho-L-seryl-[protein] + ADP + H(+). The catalysed reaction is L-threonyl-[protein] + ATP = O-phospho-L-threonyl-[protein] + ADP + H(+). The polypeptide is Putative serine/threonine-protein kinase C01C4.3 (Caenorhabditis elegans).